The chain runs to 139 residues: Putative pre-16S rRNA nuclease (139 aa).

It belongs to the YqgF nuclease family.

The protein localises to the cytoplasm. Could be a nuclease involved in processing of the 5'-end of pre-16S rRNA. In Rubrobacter xylanophilus (strain DSM 9941 / JCM 11954 / NBRC 16129 / PRD-1), this protein is Putative pre-16S rRNA nuclease.